The sequence spans 709 residues: Elongation factor G (709 aa).

Residues 9–292 (AYYRNIGISA…AVVEYLPSPT (284 aa)) form the tr-type G domain. GTP is bound by residues 18–25 (AHIDAGKT), 89–93 (DTPGH), and 143–146 (NKMD).

The protein belongs to the TRAFAC class translation factor GTPase superfamily. Classic translation factor GTPase family. EF-G/EF-2 subfamily.

It is found in the cytoplasm. Functionally, catalyzes the GTP-dependent ribosomal translocation step during translation elongation. During this step, the ribosome changes from the pre-translocational (PRE) to the post-translocational (POST) state as the newly formed A-site-bound peptidyl-tRNA and P-site-bound deacylated tRNA move to the P and E sites, respectively. Catalyzes the coordinated movement of the two tRNA molecules, the mRNA and conformational changes in the ribosome. The chain is Elongation factor G from Blochmanniella floridana.